Here is a 1413-residue protein sequence, read N- to C-terminus: DNA-directed RNA polymerase subunit beta' (1413 aa).

Cysteine 70, cysteine 72, cysteine 85, and cysteine 88 together coordinate Zn(2+). Mg(2+) is bound by residues aspartate 460, aspartate 462, and aspartate 464. 4 residues coordinate Zn(2+): cysteine 819, cysteine 893, cysteine 900, and cysteine 903. Residues 1392–1413 form a disordered region; sequence EEAFDFGTPSAPAEEPQHPAAE.

The protein belongs to the RNA polymerase beta' chain family. As to quaternary structure, the RNAP catalytic core consists of 2 alpha, 1 beta, 1 beta' and 1 omega subunit. When a sigma factor is associated with the core the holoenzyme is formed, which can initiate transcription. It depends on Mg(2+) as a cofactor. The cofactor is Zn(2+).

The catalysed reaction is RNA(n) + a ribonucleoside 5'-triphosphate = RNA(n+1) + diphosphate. DNA-dependent RNA polymerase catalyzes the transcription of DNA into RNA using the four ribonucleoside triphosphates as substrates. The polypeptide is DNA-directed RNA polymerase subunit beta' (Burkholderia cenocepacia (strain ATCC BAA-245 / DSM 16553 / LMG 16656 / NCTC 13227 / J2315 / CF5610) (Burkholderia cepacia (strain J2315))).